Reading from the N-terminus, the 980-residue chain is Putative helicase 087L (980 aa).

In terms of domain architecture, Helicase ATP-binding spans 59-246 (INPHTLYDGV…IDLFNLILRT (188 aa)). 72 to 79 (HEMGTGKT) is a binding site for ATP. The DEAH box motif lies at 189–192 (DEAH). Positions 389-546 (RLSFVFSEFV…SIDLHMYEIA (158 aa)) constitute a Helicase C-terminal domain.

This sequence belongs to the IIV-6 022L family. SNF2/RAD54 helicase subfamily.

The polypeptide is Putative helicase 087L (Invertebrate iridescent virus 3 (IIV-3)).